Reading from the N-terminus, the 451-residue chain is Phosphoglucosamine mutase (451 aa).

Serine 102 functions as the Phosphoserine intermediate in the catalytic mechanism. Positions 102, 243, 245, and 247 each coordinate Mg(2+). At serine 102 the chain carries Phosphoserine.

It belongs to the phosphohexose mutase family. Mg(2+) is required as a cofactor. Activated by phosphorylation.

The catalysed reaction is alpha-D-glucosamine 1-phosphate = D-glucosamine 6-phosphate. Its function is as follows. Catalyzes the conversion of glucosamine-6-phosphate to glucosamine-1-phosphate. This chain is Phosphoglucosamine mutase, found in Chelativorans sp. (strain BNC1).